Here is a 551-residue protein sequence, read N- to C-terminus: Hyaluronan synthase 2 (551 aa).

Topologically, residues 1-11 (MHCERFICILR) are cytoplasmic. Residues 12–32 (IIGTTLFGVSLLLGISAAYIV) traverse the membrane as a helical segment. The Extracellular segment spans residues 33–45 (GYQFIQTDNYYFS). A helical transmembrane segment spans residues 46 to 66 (FGLYGAILALHLIIQSLFAFL). Residues 67 to 374 (EHRKMKRSLE…NSLWFHKHHL (308 aa)) are Cytoplasmic-facing. The helical transmembrane segment at 375–395 (WMTYEAVITGFFPFFLIATVI) threads the bilayer. The Extracellular portion of the chain corresponds to 396 to 402 (QLFYRGR). A helical transmembrane segment spans residues 403 to 423 (IWNILLFLLTVQLVGLIKSSF). Residues 424–429 (ASALRG) are Cytoplasmic-facing. The helical transmembrane segment at 430–450 (NIVMVFMSFYSVLYMSSLLPA) threads the bilayer. The Extracellular portion of the chain corresponds to 451–470 (KMFAIATINKAGWGTSGRKT). Residues 471–491 (IVVNFIGLIPITVWFTILLGG) form a helical membrane-spanning segment. Residues 492–509 (VCYTIWRETKKPFSESEK) lie on the Cytoplasmic side of the membrane. A helical transmembrane segment spans residues 510-530 (IVLAVGAILYACYWVMLLTMY). The Extracellular segment spans residues 531–551 (VSLVMKCGRRRKEPQHDLVLA).

The protein belongs to the NodC/HAS family. Homodimer; dimerization promotes enzymatic activity. Requires Mg(2+) as cofactor.

The protein resides in the cell membrane. It localises to the endoplasmic reticulum membrane. Its subcellular location is the vesicle. The protein localises to the golgi apparatus membrane. It is found in the lysosome. The enzyme catalyses [hyaluronan](n) + UDP-N-acetyl-alpha-D-glucosamine = N-acetyl-beta-D-glucosaminyl-(1-&gt;4)-[hyaluronan](n) + UDP + H(+). It catalyses the reaction N-acetyl-beta-D-glucosaminyl-(1-&gt;4)-[hyaluronan](n) + UDP-alpha-D-glucuronate = [hyaluronan](n+1) + UDP + H(+). Its pathway is glycan biosynthesis; hyaluronan biosynthesis. In terms of biological role, catalyzes the addition of GlcNAc or GlcUA monosaccharides to the nascent hyaluronan polymer. Therefore, it is essential to hyaluronan synthesis a major component of most extracellular matrices that has a structural role in tissues architectures and regulates cell adhesion, migration and differentiation. This is one of three isoenzymes responsible for cellular hyaluronan synthesis and it is particularly responsible for the synthesis of high molecular mass hyaluronan. The chain is Hyaluronan synthase 2 (has2) from Xenopus laevis (African clawed frog).